The primary structure comprises 521 residues: Non-specific phospholipase C5 (521 aa).

The span at 478-487 (SKKARERGGD) shows a compositional bias: basic and acidic residues. Residues 478–521 (SKKARERGGDENDIVFCVDDDDDHNVVKPPPSQSEPSHATPWSN) are disordered. Polar residues predominate over residues 511 to 521 (SEPSHATPWSN).

It belongs to the bacterial phospholipase C family. Specifically expressed in flowers.

It is found in the cytoplasm. It localises to the cytosol. It carries out the reaction a 1,2-diacyl-sn-glycero-3-phosphocholine + H2O = phosphocholine + a 1,2-diacyl-sn-glycerol + H(+). Its function is as follows. Non-specific phospholipase C (PLC) which assumes minor PLC activity during inorganic phosphate starvation. Can hydrolyze both phosphatidylcholine (PC) and phosphatidylethanolamine (PE). Required for normal accumulation of digalactosyldiacylglycerol (DGDG) during phosphate limitation and may contribute to the conversion of phospholipids to diacylglycerol, the substrate for galactolipid synthesis. The protein is Non-specific phospholipase C5 (NPC5) of Arabidopsis thaliana (Mouse-ear cress).